A 104-amino-acid chain; its full sequence is Nucleoid-associated protein Amuc_1227 (104 aa).

The protein belongs to the YbaB/EbfC family. Homodimer.

The protein localises to the cytoplasm. Its subcellular location is the nucleoid. Functionally, binds to DNA and alters its conformation. May be involved in regulation of gene expression, nucleoid organization and DNA protection. The chain is Nucleoid-associated protein Amuc_1227 from Akkermansia muciniphila (strain ATCC BAA-835 / DSM 22959 / JCM 33894 / BCRC 81048 / CCUG 64013 / CIP 107961 / Muc).